We begin with the raw amino-acid sequence, 1330 residues long: Pre-mRNA-splicing factor CWC22 homolog (1330 aa).

The tract at residues 1-377 is disordered; it reads MGESDAESDS…AAKITERQRK (377 aa). Over residues 9–36 the composition is skewed to low complexity; the sequence is DSSSNSSSSDTSSGSDSDARSESSSSES. Residues 46-94 are compositionally biased toward basic and acidic residues; that stretch reads QEESAKDAKKTDDTDRGEKRAKERDAGQDEQPTEQKKTPAAEPRSERQH. The span at 99 to 113 shows a compositional bias: low complexity; sequence AGVEKQQEEAVAAAE. A compositionally biased stretch (basic and acidic residues) spans 115–135; it reads ESEKLNEAKKVETPVQRKEEA. Over residues 138-148 the composition is skewed to polar residues; it reads SSVTKELNSPK. The segment covering 149–166 has biased composition (basic and acidic residues); sequence AQEENAARELEERRKDEE. Residues 168–177 are compositionally biased toward polar residues; the sequence is PVTTNGSSKE. Phosphothreonine occurs at positions 191 and 201. Composition is skewed to basic and acidic residues over residues 191-201 and 208-236; these read TADHIEEGEIT and LPTKEEKKAVASKSPPKETQRKQSRSPDG. Ser219 and Ser221 each carry phosphoserine. Over residues 252–277 the composition is skewed to basic residues; the sequence is SRRRRRSRSKGSRTRSRSKSPIRRRS. 2 stretches are compositionally biased toward basic and acidic residues: residues 278–307 and 316–325; these read NSLERRRVERQRRHEERDKRDEERAKEREK and SSRRRDDSRE. Residues 355–366 are compositionally biased toward low complexity; sequence TETNADNETVTE. The MIF4G domain occupies 420–603; that stretch reads KKSIHGYINK…EVLFQIRKDG (184 aa). The disordered stretch occupies residues 660–697; it reads REILGSDDGSSSGSGSGSDSDSDSDGESGSDAEKKAEA. A compositionally biased stretch (low complexity) spans 665–678; sequence SDDGSSSGSGSGSD. Residues 679–689 show a composition bias toward acidic residues; that stretch reads SDSDSDGESGS. The MI domain occupies 710–826; sequence ALRRTIYLTI…SWDVLECIQL (117 aa). The disordered stretch occupies residues 926-1330; the sequence is FRDGSAPAGN…RSSRRSKGRS (405 aa). The span at 941–951 shows a compositional bias: low complexity; sequence SSSSSSSSSSD. Residues 952-963 are compositionally biased toward acidic residues; the sequence is TDSEDSSEEDSS. Over residues 964–976 the composition is skewed to low complexity; that stretch reads SDSSSESSSSDSS. Basic residues predominate over residues 980-1012; that stretch reads KKKRKRKDKDKKKSKKATKEKSKKTKNKKKKKK. Residues 1013 to 1033 are compositionally biased toward basic and acidic residues; sequence AEKEQEKEKEKQRKSKKEKEK. Over residues 1034–1054 the composition is skewed to basic residues; the sequence is DKKRKKEEKKAAKKKSKHRRK. The span at 1072–1082 shows a compositional bias: low complexity; sequence SESSDSSNSSS. A compositionally biased stretch (basic and acidic residues) spans 1089 to 1110; that stretch reads PQAKIKRQEHVEKNKFRGRTQD. At Thr1108 the chain carries Phosphothreonine. Phosphoserine occurs at positions 1111, 1121, 1180, and 1181. Composition is skewed to basic and acidic residues over residues 1133-1195 and 1203-1320; these read RRRD…VAHD and SRSY…SRRE. At Tyr1182 the chain carries Phosphotyrosine. Basic residues predominate over residues 1321–1330; sequence RSSRRSKGRS.

It belongs to the CWC22 family. As to quaternary structure, component of the spliceosome C complex. Interacts with eIF4AIII.

The protein localises to the nucleus speckle. Functionally, required for pre-mRNA splicing and for exon-junction complex (EJC) assembly. Hinders eIF4AIII from non-specifically binding RNA and escorts it to the splicing machinery to promote EJC assembly on mature mRNAs. The polypeptide is Pre-mRNA-splicing factor CWC22 homolog (ncm) (Drosophila melanogaster (Fruit fly)).